A 161-amino-acid chain; its full sequence is Cyclic pyranopterin monophosphate synthase (161 aa).

Substrate contacts are provided by residues 73 to 75 and 110 to 111; these read LCH and ME. Asp-125 is a catalytic residue.

Belongs to the MoaC family. Homohexamer; trimer of dimers.

The enzyme catalyses (8S)-3',8-cyclo-7,8-dihydroguanosine 5'-triphosphate = cyclic pyranopterin phosphate + diphosphate. The protein operates within cofactor biosynthesis; molybdopterin biosynthesis. In terms of biological role, catalyzes the conversion of (8S)-3',8-cyclo-7,8-dihydroguanosine 5'-triphosphate to cyclic pyranopterin monophosphate (cPMP). This Pseudomonas syringae pv. syringae (strain B728a) protein is Cyclic pyranopterin monophosphate synthase.